A 502-amino-acid polypeptide reads, in one-letter code: MPSPHGGVLQDLVARDASKKAELLEIAQSGDLTSWSLTARQICDLELILNGGFSPLDGFLNQQDYQSVVEKSRLQNGLVWTIPITLDVDAEFASQLSPDQRIVLLQDNEFPLAILTVSDVYQPDKAVEAKKVFRGDPEHPAVKYLFEQAGEFYVGGSLEAIQLPVHYDYPGWRKTPAQLRLEFESKQWDRVVAFQTRNPMHRAHRELTVRAARSNNSKILIHPVVGLTKPGDIDHHTRVRVYQEIIKRYPNGMAQLSLLPLAMRMGGDREAVWHAIIRKNYGASHFIVGRDHAGPGKNSKGVDFYGPYDAQELVESYKNELDIEVVPFRMVTYLPDEDRYAPIDEIDTDKTRTLNISGTELRNRLRDGGEIPAWFSYPEVVKILRESNPSRPKQGFALVLSETLPAQLKTALLSTFLQYGGGRHYKVLEHGNNEEILALVPDFVRSGTGLILQNASSLKGTNVFKIGEESGSDIPLETEDKNILHIVQRVVLFLEDQGFFQF.

The segment at 1-167 (MPSPHGGVLQ…LEAIQLPVHY (167 aa)) is N-terminal. Positions 168–393 (DYPGWRKTPA…LRESNPSRPK (226 aa)) are catalytic. Gln-195 lines the sulfate pocket. Residues 195-198 (QTRN) and 289-292 (GRDH) contribute to the ATP site. Residues Thr-196, Arg-197, and Asn-198 contribute to the active site. Arg-197 serves as a coordination point for sulfate. Residue Ala-293 participates in sulfate binding. Residue Val-331 participates in ATP binding. Residues 394–502 (QGFALVLSET…FLEDQGFFQF (109 aa)) form a required for oligomerization; adenylyl-sulfate kinase-like region.

Belongs to the sulfate adenylyltransferase family. In terms of assembly, homohexamer. Dimer of trimers.

Its subcellular location is the cytoplasm. The enzyme catalyses sulfate + ATP + H(+) = adenosine 5'-phosphosulfate + diphosphate. The protein operates within sulfur metabolism; hydrogen sulfide biosynthesis; sulfite from sulfate: step 1/3. Its function is as follows. Catalyzes the first intracellular reaction of sulfate assimilation, forming adenosine-5'-phosphosulfate (APS) from inorganic sulfate and ATP. Plays an important role in sulfate activation as a component of the biosynthesis pathway of sulfur-containing amino acids. This chain is Sulfate adenylyltransferase, found in Kluyveromyces lactis (strain ATCC 8585 / CBS 2359 / DSM 70799 / NBRC 1267 / NRRL Y-1140 / WM37) (Yeast).